Reading from the N-terminus, the 526-residue chain is Amino acid transporter heavy chain SLC3A2 (526 aa).

The disordered stretch occupies residues 1 to 31 (MSQDTEVDMKDVELNELEPEKQPMNAADGAA). Residues 1–75 (MSQDTEVDMK…AGSPGWVRTR (75 aa)) are Cytoplasmic-facing. The residue at position 2 (serine 2) is a Phosphoserine. At threonine 5 the chain carries Phosphothreonine. Basic and acidic residues predominate over residues 7–21 (VDMKDVELNELEPEK). A Glycyl lysine isopeptide (Lys-Gly) (interchain with G-Cter in ubiquitin) cross-link involves residue lysine 42. A Phosphoserine modification is found at serine 58. Lysine 59 participates in a covalent cross-link: Glycyl lysine isopeptide (Lys-Gly) (interchain with G-Cter in SUMO2). A helical; Signal-anchor for type II membrane protein transmembrane segment spans residues 76–99 (WALLLLFWLGWLGMLAGAVVIIVR). At 100–526 (APRCRELPVQ…GLLLQFPFVA (427 aa)) the chain is on the extracellular side. N-linked (GlcNAc...) asparagine glycosylation is found at asparagine 166, asparagine 259, and asparagine 263. Residue serine 300 is modified to Phosphoserine. Asparagine 301 carries an N-linked (GlcNAc...) asparagine glycan. The residue at position 302 (serine 302) is a Phosphoserine. Residues asparagine 318, asparagine 385, and asparagine 399 are each glycosylated (N-linked (GlcNAc...) asparagine). Phosphoserine is present on serine 420. A glycan (N-linked (GlcNAc...) asparagine) is linked at asparagine 509.

Belongs to the SLC3A transporter family. Disulfide-linked heterodimer with a non-glycosylated light chain (SLC7A5, SLC7A6, SLC7A7, SLC7A8, SLC7A10 or SLC7A11). Interacts with TLCD3A/CT120 and ICAM1. Constitutively and specifically associates with beta-1 integrins (alpha-2/beta-1, alpha-3/beta-1, alpha-5/beta-1 and alpha-6/beta-1), but minimally with alpha-4/beta-1. Interacts with LAPTM4B; recruits SLC3A2 and SLC7A5 to lysosomes to promote leucine uptake into these organelles and is required for mTORC1 activation. In terms of processing, phosphorylation on Ser-300 or Ser-302 and on Ser-420 by ecto-protein kinases favors heterotypic cell-cell interactions. N-glycosylated; N-glycosylation is crucial for trafficking and stability of SLC3A2 to the plasma membrane. Detected on the surface of embryonic epithelial cells in the epidermis, thymus, kidney, intestine, brain choroid plexus, and in retina. Detected in adult and embryonic brain, spleen, kidney, intestine and liver, and in adult testis (at protein level). Observed in all adult tissues tested with strongest expression in kidney, small intestine, spleen, thymus and liver. Moderate expression in brain, stomach, heart, testis, lung, skin, pancreas and skeletal muscle. In brain expressed on capillary endothelia in cerebral cortex.

The protein resides in the apical cell membrane. It is found in the cell membrane. It localises to the cell junction. The protein localises to the lysosome membrane. Its subcellular location is the melanosome. The protein resides in the basolateral cell membrane. In terms of biological role, acts as a chaperone that facilitates biogenesis and trafficking of functional transporters heterodimers to the plasma membrane. Forms heterodimer with SLC7 family transporters (SLC7A5, SLC7A6, SLC7A7, SLC7A8, SLC7A10 and SLC7A11), a group of amino-acid antiporters. Heterodimers function as amino acids exchangers, the specificity of the substrate depending on the SLC7A subunit. Heterodimers SLC3A2/SLC7A6 or SLC3A2/SLC7A7 mediate the uptake of dibasic amino acids. Heterodimer SLC3A2/SLC7A11 functions as an antiporter by mediating the exchange of extracellular anionic L-cystine and intracellular L-glutamate across the cellular plasma membrane. SLC3A2/SLC7A10 translocates small neutral L- and D-amino acids across the plasma membrane. SLC3A2/SLC75 or SLC3A2/SLC7A8 translocates neutral amino acids with broad specificity, thyroid hormones and L-DOPA. SLC3A2 is essential for plasma membrane localization, stability, and the transport activity of SLC7A5 and SLC7A8. When associated with LAPTM4B, the heterodimer SLC7A5 is recruited to lysosomes to promote leucine uptake into these organelles, and thereby mediates mTORC1 activation. Modulates integrin-related signaling and is essential for integrin-dependent cell spreading, migration and tumor progression. The protein is Amino acid transporter heavy chain SLC3A2 of Mus musculus (Mouse).